The following is a 327-amino-acid chain: Toluene-4-monooxygenase system, hydroxylase component subunit beta (327 aa).

It belongs to the TmoE/XamoE family. In terms of assembly, the alkene monooxygenase multicomponent enzyme system is composed of an electron transfer component and a monooxygenase component interacting with the effector protein TmoD. The electron transfer component is composed of a ferredoxin reductase (TmoF) and a ferredoxin (TmoC), and the monooxygenase component is formed by a heterohexamer (dimer of heterotrimers) of two alpha subunits (TmoA), two beta subunits (TmoE) and two gamma subunits (TmoB).

The catalysed reaction is toluene + NADH + O2 + H(+) = 4-methylphenol + NAD(+) + H2O. It participates in xenobiotic degradation; toluene degradation. With respect to regulation, inhibited by Zn(2+) and Cu(2+). Its function is as follows. Component of the toluene-4-monooxygenase multicomponent enzyme system which catalyzes the O2- and NADH-dependent hydroxylation of toluene to form p-cresol. Also able to convert benzene to phenol, catechol, and 1,2,3-trihydroxybenzene by successive hydroxylations. The polypeptide is Toluene-4-monooxygenase system, hydroxylase component subunit beta (Ectopseudomonas mendocina (Pseudomonas mendocina)).